We begin with the raw amino-acid sequence, 550 residues long: Arginine--tRNA ligase (550 aa).

The 'HIGH' region motif lies at A130–G140.

This sequence belongs to the class-I aminoacyl-tRNA synthetase family. In terms of assembly, monomer.

It is found in the cytoplasm. The catalysed reaction is tRNA(Arg) + L-arginine + ATP = L-arginyl-tRNA(Arg) + AMP + diphosphate. This is Arginine--tRNA ligase from Mycobacterium sp. (strain JLS).